A 149-amino-acid chain; its full sequence is UPF0178 protein NT01CX_0440 (149 aa).

It belongs to the UPF0178 family.

The protein is UPF0178 protein NT01CX_0440 of Clostridium novyi (strain NT).